A 398-amino-acid polypeptide reads, in one-letter code: Acetate kinase (398 aa).

Residue N9 coordinates Mg(2+). K16 provides a ligand contact to ATP. R89 is a substrate binding site. Residue D146 is the Proton donor/acceptor of the active site. Residues 206–210 (HLGNG), 281–283 (DCR), and 329–333 (GIGEN) each bind ATP. E384 lines the Mg(2+) pocket.

Belongs to the acetokinase family. Homodimer. Mg(2+) is required as a cofactor. Mn(2+) serves as cofactor.

The protein localises to the cytoplasm. It catalyses the reaction acetate + ATP = acetyl phosphate + ADP. Its pathway is metabolic intermediate biosynthesis; acetyl-CoA biosynthesis; acetyl-CoA from acetate: step 1/2. Functionally, catalyzes the formation of acetyl phosphate from acetate and ATP. Can also catalyze the reverse reaction. The protein is Acetate kinase of Vibrio campbellii (strain ATCC BAA-1116).